Reading from the N-terminus, the 490-residue chain is Nicotinate phosphoribosyltransferase (490 aa).

Position 206 is a phosphohistidine (H206).

It belongs to the NAPRTase family. Transiently phosphorylated on a His residue during the reaction cycle. Phosphorylation strongly increases the affinity for substrates and increases the rate of nicotinate D-ribonucleotide production. Dephosphorylation regenerates the low-affinity form of the enzyme, leading to product release.

The catalysed reaction is nicotinate + 5-phospho-alpha-D-ribose 1-diphosphate + ATP + H2O = nicotinate beta-D-ribonucleotide + ADP + phosphate + diphosphate. The protein operates within cofactor biosynthesis; NAD(+) biosynthesis; nicotinate D-ribonucleotide from nicotinate: step 1/1. Functionally, catalyzes the synthesis of beta-nicotinate D-ribonucleotide from nicotinate and 5-phospho-D-ribose 1-phosphate at the expense of ATP. The polypeptide is Nicotinate phosphoribosyltransferase (pncB) (Bacillus subtilis (strain 168)).